Reading from the N-terminus, the 522-residue chain is MSSTLTCYCPGDGSLLGEVKLFNKSDIDQSIILAEEAQKEWKSTSFAERRNFLKALKENIIRNQDKYAEIACKDTGKTLVDAAFGEILVTLEKINWTLANGEQSLRPTKRPNSLLTSYKGGYVKYEPLGVIAALVSWNYPLHNALGPIISALFAGNAIVVKGSELTAWSTHQYCEMVRSLLQSMGHSPELVQCITCLPDVADHLTSHSGIKHITFIGSQPIAKLVAASAAKQLTPLCLELGGKDPCILTDDHRLEEILSIVMRGVFQSAGQNCIGIERIIALDGVYDTIITKLYNRISTMRLGMYTQNDVDMGAMVSNNRFDHLESLIQDAVSKGARLVYGGHRFQHPKYPKGNYFLPTLLVDATNEMKIAQEECFAPIALVFRAKSPEHALEIANGTEFGLGASVFGRDKQLCQYFTDNLETGMVAVNDFGAFYLLQMPFGGCKKSGYGRFAGYEGLRGICNSKAIAYDRFSAIHTGIPPAVDYPIPDSQKAWQFVRGLMGTVYGAWISLVPNVYQLWRNS.

E239 acts as the Proton acceptor in catalysis. C273 functions as the Nucleophile in the catalytic mechanism.

It belongs to the aldehyde dehydrogenase family.

It localises to the cytoplasm. It is found in the nucleus. The protein is Putative aldehyde dehydrogenase-like protein C21C3 of Schizosaccharomyces pombe (strain 972 / ATCC 24843) (Fission yeast).